The primary structure comprises 124 residues: Cytochrome b5-like protein (124 aa).

The helical transmembrane segment at 5–22 (YLLILIIIYVIKIICRYF) threads the bilayer. The 76-residue stretch at 49-124 (NQINQVNQVN…ILSKYKITEK (76 aa)) folds into the Cytochrome b5 heme-binding domain. Residues H84 and H108 each contribute to the heme site.

It belongs to the cytochrome b5 family.

It is found in the membrane. Functionally, membrane bound hemoprotein which function as an electron carrier for several membrane bound oxygenases. The polypeptide is Cytochrome b5-like protein (Acanthamoeba polyphaga (Amoeba)).